The following is a 397-amino-acid chain: Acetate kinase (397 aa).

N8 is a binding site for Mg(2+). K15 provides a ligand contact to ATP. A substrate-binding site is contributed by R89. Residue D146 is the Proton donor/acceptor of the active site. ATP contacts are provided by residues H206–G210, D280–R282, and G328–N332. E382 contacts Mg(2+).

It belongs to the acetokinase family. Homodimer. Requires Mg(2+) as cofactor. The cofactor is Mn(2+).

It localises to the cytoplasm. The enzyme catalyses acetate + ATP = acetyl phosphate + ADP. It participates in metabolic intermediate biosynthesis; acetyl-CoA biosynthesis; acetyl-CoA from acetate: step 1/2. Functionally, catalyzes the formation of acetyl phosphate from acetate and ATP. Can also catalyze the reverse reaction. This Leifsonia xyli subsp. xyli (strain CTCB07) protein is Acetate kinase.